The primary structure comprises 232 residues: MKYLNQHEAISVDEELFNEYKFSVDQLMELAGLSCAHVINDCYGSPQSTVKRKVLVCCGPGNNGGDGLVAARHLKLMNFDAHVYYPKRTEKDLFINLQHQCESMGITVSKDCPTLEWVEGEFGLIVDALFGFSFKPPVRESFAPIMDVLNKSKVPIVSVDIPSGWHVEEGPQDECNIQPDCLISLTAPKLCAKKLTNAKHYLGGRFVPPKLQDKYAMELPTYEGNNLFVKLS.

A YjeF N-terminal domain is found at 9–219; it reads AISVDEELFN…KLQDKYAMEL (211 aa). Position 62–66 (62–66) interacts with (6S)-NADPHX; it reads NNGGD. The K(+) site is built by Asn63 and Asp127. (6S)-NADPHX contacts are provided by residues 131-137 and Asp160; that span reads GFSFKPP. Residue Ser163 participates in K(+) binding.

It belongs to the NnrE/AIBP family. It depends on K(+) as a cofactor.

It carries out the reaction (6R)-NADHX = (6S)-NADHX. The catalysed reaction is (6R)-NADPHX = (6S)-NADPHX. In terms of biological role, catalyzes the epimerization of the S- and R-forms of NAD(P)HX, a damaged form of NAD(P)H that is a result of enzymatic or heat-dependent hydration. This is a prerequisite for the S-specific NAD(P)H-hydrate dehydratase to allow the repair of both epimers of NAD(P)HX. The sequence is that of NAD(P)H-hydrate epimerase from Aedes aegypti (Yellowfever mosquito).